A 227-amino-acid chain; its full sequence is Flagellar transcriptional regulator FtcR (227 aa).

The region spanning Met1–Arg116 is the Response regulatory domain. The segment at residues Ala127–Ile226 is a DNA-binding region (ompR/PhoB-type).

Its function is as follows. Required for transcription of flagellar genes. In Brucella abortus (strain 2308), this protein is Flagellar transcriptional regulator FtcR (ftcR).